Here is a 275-residue protein sequence, read N- to C-terminus: Malonyl-[acyl-carrier protein] O-methyltransferase (275 aa).

The protein belongs to the methyltransferase superfamily.

The catalysed reaction is malonyl-[ACP] + S-adenosyl-L-methionine = malonyl-[ACP] methyl ester + S-adenosyl-L-homocysteine. The protein operates within cofactor biosynthesis; biotin biosynthesis. In terms of biological role, converts the free carboxyl group of a malonyl-thioester to its methyl ester by transfer of a methyl group from S-adenosyl-L-methionine (SAM). It allows to synthesize pimeloyl-ACP via the fatty acid synthetic pathway. The polypeptide is Malonyl-[acyl-carrier protein] O-methyltransferase (Methylococcus capsulatus (strain ATCC 33009 / NCIMB 11132 / Bath)).